We begin with the raw amino-acid sequence, 114 residues long: Large ribosomal subunit protein bL17 (114 aa).

Belongs to the bacterial ribosomal protein bL17 family. In terms of assembly, part of the 50S ribosomal subunit. Contacts protein L32.

The sequence is that of Large ribosomal subunit protein bL17 from Clostridium acetobutylicum (strain ATCC 824 / DSM 792 / JCM 1419 / IAM 19013 / LMG 5710 / NBRC 13948 / NRRL B-527 / VKM B-1787 / 2291 / W).